The sequence spans 190 residues: Putative hydrolase YdeN (190 aa).

Active-site charge relay system residues include serine 71, aspartate 137, and histidine 164.

Belongs to the RBBP9 family.

This is Putative hydrolase YdeN (ydeN) from Bacillus subtilis (strain 168).